A 512-amino-acid chain; its full sequence is ATP synthase subunit beta 2 (512 aa).

174 to 181 (GGAGVGKT) is an ATP binding site. The segment covering 479–494 (RRKEEAAREADARRDA) has biased composition (basic and acidic residues). A disordered region spans residues 479–512 (RRKEEAAREADARRDAAAGAASGSAGPQGAQHGR).

This sequence belongs to the ATPase alpha/beta chains family. In terms of assembly, F-type ATPases have 2 components, CF(1) - the catalytic core - and CF(0) - the membrane proton channel. CF(1) has five subunits: alpha(3), beta(3), gamma(1), delta(1), epsilon(1). CF(0) has three main subunits: a(1), b(2) and c(9-12). The alpha and beta chains form an alternating ring which encloses part of the gamma chain. CF(1) is attached to CF(0) by a central stalk formed by the gamma and epsilon chains, while a peripheral stalk is formed by the delta and b chains.

Its subcellular location is the cell inner membrane. It carries out the reaction ATP + H2O + 4 H(+)(in) = ADP + phosphate + 5 H(+)(out). Produces ATP from ADP in the presence of a proton gradient across the membrane. The catalytic sites are hosted primarily by the beta subunits. This chain is ATP synthase subunit beta 2, found in Burkholderia thailandensis (strain ATCC 700388 / DSM 13276 / CCUG 48851 / CIP 106301 / E264).